The following is a 154-amino-acid chain: Myoglobin (154 aa).

A Globin domain is found at 2–148 (GLSDGEWQLV…FRNDIAAKYK (147 aa)). Ser-4 is modified (phosphoserine). His-65 provides a ligand contact to nitrite. O2 is bound at residue His-65. The residue at position 68 (Thr-68) is a Phosphothreonine. A heme b-binding site is contributed by His-94.

It belongs to the globin family. In terms of assembly, monomeric.

The protein resides in the cytoplasm. It localises to the sarcoplasm. The enzyme catalyses Fe(III)-heme b-[protein] + nitric oxide + H2O = Fe(II)-heme b-[protein] + nitrite + 2 H(+). It carries out the reaction H2O2 + AH2 = A + 2 H2O. Functionally, monomeric heme protein which primary function is to store oxygen and facilitate its diffusion within muscle tissues. Reversibly binds oxygen through a pentacoordinated heme iron and enables its timely and efficient release as needed during periods of heightened demand. Depending on the oxidative conditions of tissues and cells, and in addition to its ability to bind oxygen, it also has a nitrite reductase activity whereby it regulates the production of bioactive nitric oxide. Under stress conditions, like hypoxia and anoxia, it also protects cells against reactive oxygen species thanks to its pseudoperoxidase activity. This is Myoglobin (MB) from Ctenodactylus gundi (Northern gundi).